Reading from the N-terminus, the 115-residue chain is NADH-ubiquinone oxidoreductase chain 3 (115 aa).

Helical transmembrane passes span 4-24 (LVTM…AFWL), 55-75 (FFLV…LLPM), and 86-106 (TMTL…AYEW).

This sequence belongs to the complex I subunit 3 family. As to quaternary structure, core subunit of respiratory chain NADH dehydrogenase (Complex I) which is composed of 45 different subunits. Interacts with TMEM186. Interacts with TMEM242.

Its subcellular location is the mitochondrion inner membrane. The enzyme catalyses a ubiquinone + NADH + 5 H(+)(in) = a ubiquinol + NAD(+) + 4 H(+)(out). In terms of biological role, core subunit of the mitochondrial membrane respiratory chain NADH dehydrogenase (Complex I) which catalyzes electron transfer from NADH through the respiratory chain, using ubiquinone as an electron acceptor. Essential for the catalytic activity of complex I. The polypeptide is NADH-ubiquinone oxidoreductase chain 3 (Nelsonia neotomodon (Diminutive woodrat)).